The primary structure comprises 398 residues: Immunoglobulin heavy constant alpha 1 (398 aa).

Over 1–364 (ASPTSPKVFP…TPGANLWPTT (364 aa)) the chain is Extracellular. Residues 6–98 (PKVFPLSLCS…HYTNPSQDVT (93 aa)) form the Ig-like 1 domain. 2 cysteine pairs are disulfide-bonded: Cys26–Cys85 and Cys77–Cys101. The interval 96 to 122 (DVTVPCPVPSTPPTPSPSTPPTPSPSC) is disordered. Positions 101–119 (CPVPSTPPTPSPSTPPTPS) are enriched in pro residues. A glycan (O-linked (GalNAc...) serine) is linked at Ser105. Residues Thr106 and Thr109 are each glycosylated (O-linked (GalNAc...) threonine). Ser111 and Ser113 each carry an O-linked (GalNAc...) serine glycan. Thr114 and Thr117 each carry an O-linked (GalNAc...) threonine glycan. Ser119 and Ser121 each carry an O-linked (GalNAc...) serine glycan. Intrachain disulfides connect Cys123–Cys180, Cys147–Cys204, and Cys250–Cys313. 2 consecutive Ig-like domains span residues 125–220 (PRLS…ATLS) and 228–330 (PEVH…KTID). The N-linked (GlcNAc...) (complex) asparagine glycan is linked to Asn144. Pro340 carries N-linked (GlcNAc...) (complex) asparagine glycosylation. 3-hydroxy-L-kynurenine is bound at residue Glu352. A helical transmembrane segment spans residues 365–383 (ITFLTLFLLSLFYSTALTV). Residues 384–398 (TSVRGPSGNREGPQY) are Cytoplasmic-facing.

As to quaternary structure, immunoglobulins are composed of two identical heavy chains and two identical light chains; disulfide-linked. Monomeric or polymeric. Part of the secretory IgA (sIgA) complex that consists of two, four or five IgA monomers, and two additional non-Ig polypeptides, namely the JCHAIN and the secretory component (the proteolytic product of PIGR). 3-Hydroxykynurenine, an oxidized tryptophan metabolite that is common in biological fluids, reacts with alpha-1-microglobulin to form heterogeneous polycyclic chromophores including hydroxanthommatin. The chromophore reacts with accessible cysteines forming non-reducible thioether cross-links with Ig alpha-1 chain C region Cys-352. Post-translationally, N- and O-glycosylated. N-glycan at Asn-144: Hex5HexNAc4.

It is found in the secreted. Its subcellular location is the cell membrane. Functionally, constant region of immunoglobulin heavy chains. Immunoglobulins, also known as antibodies, are membrane-bound or secreted glycoproteins produced by B lymphocytes. In the recognition phase of humoral immunity, the membrane-bound immunoglobulins serve as receptors which, upon binding of a specific antigen, trigger the clonal expansion and differentiation of B lymphocytes into immunoglobulins-secreting plasma cells. Secreted immunoglobulins mediate the effector phase of humoral immunity, which results in the elimination of bound antigens. The antigen binding site is formed by the variable domain of one heavy chain, together with that of its associated light chain. Thus, each immunoglobulin has two antigen binding sites with remarkable affinity for a particular antigen. The variable domains are assembled by a process called V-(D)-J rearrangement and can then be subjected to somatic hypermutations which, after exposure to antigen and selection, allow affinity maturation for a particular antigen. Ig alpha is the major immunoglobulin class in body secretions. This Homo sapiens (Human) protein is Immunoglobulin heavy constant alpha 1.